Reading from the N-terminus, the 431-residue chain is Glutamyl-tRNA(Gln) amidotransferase subunit A (431 aa).

Residues Lys55 and Ser130 each act as charge relay system in the active site. The active-site Acyl-ester intermediate is Ser154.

The protein belongs to the amidase family. GatA subfamily. As to quaternary structure, heterotrimer of A, B and C subunits.

The catalysed reaction is L-glutamyl-tRNA(Gln) + L-glutamine + ATP + H2O = L-glutaminyl-tRNA(Gln) + L-glutamate + ADP + phosphate + H(+). In terms of biological role, allows the formation of correctly charged Gln-tRNA(Gln) through the transamidation of misacylated Glu-tRNA(Gln) in organisms which lack glutaminyl-tRNA synthetase. The reaction takes place in the presence of glutamine and ATP through an activated gamma-phospho-Glu-tRNA(Gln). The polypeptide is Glutamyl-tRNA(Gln) amidotransferase subunit A (Methanococcus maripaludis (strain C5 / ATCC BAA-1333)).